Here is a 35-residue protein sequence, read N- to C-terminus: Thrombin-like enzyme cerastobin (35 aa).

One can recognise a Peptidase S1 domain in the interval 1-35 (VIGGAKCNINEHRSIVLLYSSRLFGHTLINKEWVL).

This sequence belongs to the peptidase S1 family. Snake venom subfamily. In terms of assembly, monomer. Expressed by the venom gland.

Its subcellular location is the secreted. Inhibited by diisopropylfluorophosphate (DFP). Functionally, thrombin-like snake venom serine protease, that cleaves both alpha-chain (FGA) and beta-chain (FGB) of fibrinogen. Partially degrades factor X (F10), and release bradykinin from kininogen (KNG). Potently induces platelet aggregation. Shows a proteolytic activity towards protein constituents of the platelets cytoskeleton. Hydrolyzes actin, actin-binding protein, and P235. Shows a preferential cleavage at Arg-|-Xaa bonds. In Cerastes vipera (Sahara sand viper), this protein is Thrombin-like enzyme cerastobin.